Consider the following 485-residue polypeptide: MSVPLLKIGVVLSTMAMITNWMSQTLPSLVGLNTTRLSAASGGTLDRSTGVLPTNPEESWQVYSSAQDSEGRCICTVVAPQQTMCSRDARTKQLRQLLEKVQNMSQSIEVLDRRTQRDLQYVEKMENQMKGLETKFKQVEESHKQHLARQFKAIKAKMDELRPLIPVLEEYKADAKLVLQFKEEVQNLTSVLNELQEEIGAYDYDELQSRVSNLEERLRACMQKLACGKLTGISDPVTVKTSGSRFGSWMTDPLAPEGDNRVWYMDGYHNNRFVREYKSMVDFMNTDNFTSHRLPHPWSGTGQVVYNGSIYFNKFQSHIIIRFDLKTEAILKTRSLDYAGYNNMYHYAWGGHSDIDLMVDENGLWAVYATNQNAGNIVISKLDPVSLQILQTWNTSYPKRSAGEAFIICGTLYVTNGYSGGTKVHYAYQTNASTYEYIDIPFQNKYSHISMLDYNPKDRALYAWNNGHQTLYNVTLFHVIRSDEL.

The N-terminal stretch at 1–16 is a signal peptide; the sequence is MSVPLLKIGVVLSTMA. Asn-33, Asn-103, Asn-187, Asn-288, Asn-307, Asn-394, Asn-431, and Asn-473 each carry an N-linked (GlcNAc...) asparagine glycan. Residues 87–227 are a coiled coil; it reads RDARTKQLRQ…LRACMQKLAC (141 aa). Residues 226–478 enclose the Olfactomedin-like domain; the sequence is ACGKLTGISD…QTLYNVTLFH (253 aa). A disulfide bond links Cys-227 and Cys-409. An Endoplasmic reticulum retention signal motif is present at residues 482–485; sequence SDEL.

Homotetramer; disulfide-linked. Dimer of dimers, giving rise to a V-shaped homotretramer. Isoform 1 and isoform 3 interact with RTN4R. Identified in a complex with RTN4R and LINGO1. Peripherally associated with AMPAR complex. AMPAR complex consists of an inner core made of 4 pore-forming GluA/GRIA proteins (GRIA1, GRIA2, GRIA3 and GRIA4) and 4 major auxiliary subunits arranged in a twofold symmetry. One of the two pairs of distinct binding sites is occupied either by CNIH2, CNIH3 or CACNG2, CACNG3. The other harbors CACNG2, CACNG3, CACNG4, CACNG8 or GSG1L. This inner core of AMPAR complex is complemented by outer core constituents binding directly to the GluA/GRIA proteins at sites distinct from the interaction sites of the inner core constituents. Outer core constituents include at least PRRT1, PRRT2, CKAMP44/SHISA9, FRRS1L and NRN1. The proteins of the inner and outer core serve as a platform for other, more peripherally associated AMPAR constituents, including OLFM1. Alone or in combination, these auxiliary subunits control the gating and pharmacology of the AMPAR complex and profoundly impact their biogenesis and protein processing. Interacts with OLFM2. Interacts with DTNB. As to expression, expressed in the brain cortex, olfactory bulb and vomeronasal neuroepithelium (at protein level). Detected in brain cortex, hippocampus, dorsal root ganglion and olfactory bulb.

It is found in the secreted. The protein resides in the synapse. It localises to the endoplasmic reticulum. Its subcellular location is the cell projection. The protein localises to the axon. It is found in the perikaryon. Its function is as follows. Contributes to the regulation of axonal growth in the embryonic and adult central nervous system by inhibiting interactions between RTN4R and LINGO1. Inhibits RTN4R-mediated axon growth cone collapse. May play an important role in regulating the production of neural crest cells by the neural tube. May be required for normal responses to olfactory stimuli. This Mus musculus (Mouse) protein is Noelin (Olfm1).